The following is a 154-amino-acid chain: Transcriptional repressor NrdR (154 aa).

A zinc finger lies at 3–34; the sequence is CPFCGHSNTQVLDTRMSEDGDAVRRRRRCEAC. One can recognise an ATP-cone domain in the interval 49 to 139; that stretch reads PAIVKKNGSR…VYRSFEDVAE (91 aa).

The protein belongs to the NrdR family. The cofactor is Zn(2+).

In terms of biological role, negatively regulates transcription of bacterial ribonucleotide reductase nrd genes and operons by binding to NrdR-boxes. This chain is Transcriptional repressor NrdR, found in Cupriavidus pinatubonensis (strain JMP 134 / LMG 1197) (Cupriavidus necator (strain JMP 134)).